The primary structure comprises 173 residues: Bifunctional protein PyrR (173 aa).

The short motif at isoleucine 93–threonine 105 is the PRPP-binding element.

This sequence belongs to the purine/pyrimidine phosphoribosyltransferase family. PyrR subfamily. As to quaternary structure, homodimer and homohexamer; in equilibrium.

The enzyme catalyses UMP + diphosphate = 5-phospho-alpha-D-ribose 1-diphosphate + uracil. In terms of biological role, regulates transcriptional attenuation of the pyrimidine nucleotide (pyr) operon by binding in a uridine-dependent manner to specific sites on pyr mRNA. This disrupts an antiterminator hairpin in the RNA and favors formation of a downstream transcription terminator, leading to a reduced expression of downstream genes. Its function is as follows. Also displays a weak uracil phosphoribosyltransferase activity which is not physiologically significant. The sequence is that of Bifunctional protein PyrR from Streptococcus agalactiae serotype Ia (strain ATCC 27591 / A909 / CDC SS700).